A 283-amino-acid chain; its full sequence is Zinc-finger homeodomain protein 8 (283 aa).

A ZF-HD dimerization-type; degenerate zinc finger spans residues 23–68 (YKECMRNHAAAMGGQAFDGCGEYMPASPDSLKCAACGCHRSFHRRA). 2 disordered regions span residues 131-171 (AGRA…TKFT) and 244-283 (GLGTGLGTGISGDGDGDDDDTDDSPPRAAVSSPSPSPISV). Residues 148–161 (GSAGGSGSGGGGIF) show a composition bias toward gly residues. Positions 163–226 (RKRFRTKFTP…NHKNQLASSP (64 aa)) form a DNA-binding region, homeobox. Gly residues predominate over residues 244–256 (GLGTGLGTGISGD). Residues 257 to 266 (GDGDDDDTDD) are compositionally biased toward acidic residues. The segment covering 269–283 (PRAAVSSPSPSPISV) has biased composition (low complexity).

As to quaternary structure, homo- and heterodimer with other ZFHD proteins.

Its subcellular location is the nucleus. Its function is as follows. Putative transcription factor. The protein is Zinc-finger homeodomain protein 8 (ZHD8) of Oryza sativa subsp. japonica (Rice).